The following is a 117-amino-acid chain: Large ribosomal subunit protein bL20c (117 aa).

The protein belongs to the bacterial ribosomal protein bL20 family.

Its subcellular location is the plastid. It localises to the chloroplast. Functionally, binds directly to 23S ribosomal RNA and is necessary for the in vitro assembly process of the 50S ribosomal subunit. It is not involved in the protein synthesizing functions of that subunit. This chain is Large ribosomal subunit protein bL20c, found in Acorus gramineus (Dwarf sweet flag).